The primary structure comprises 1255 residues: Pre-mRNA-splicing factor ATP-dependent RNA helicase DEAH7 (1255 aa).

Residues 1-316 (MGVDPFKTTE…SDEDRSQGAE (316 aa)) form a disordered region. Basic and acidic residues predominate over residues 13-60 (EADKETNGGVPVKDKLTFKAPERKSRLGLDARAIEKKDNAKTEGEFKV). Residues 109–137 (AQESTVTTENAGTSDISITPRTLSCTSSY) show a composition bias toward polar residues. 2 consecutive short sequence motifs (nuclear localization signal) follow at residues 144–153 (RHREEHRRDR) and 172–191 (RRRE…KRRR). Over residues 144–219 (RHREEHRRDR…EWERSPHGDR (76 aa)) the composition is skewed to basic and acidic residues. Composition is skewed to low complexity over residues 220–240 (GSSY…AASP) and 271–290 (PIRA…GGRS). Positions 297–316 (REGDLTNEGHSDEDRSQGAE) are enriched in basic and acidic residues. Residues 568–731 (LQVIRENQVI…FGSVPIFNIP (164 aa)) enclose the Helicase ATP-binding domain. 581 to 588 (GETGSGKT) is a binding site for ATP. Residues 678–681 (DEAH) carry the DEAH box motif. The Helicase C-terminal domain occupies 753-933 (AVKQAMTIHI…NVVLLLKSLK (181 aa)). Basic and acidic residues predominate over residues 1190 to 1224 (LEHKKKQKEEKSGMEEEMEKLRRDQVESELRSKER). Positions 1190–1255 (LEHKKKQKEE…TFLRPKKLGL (66 aa)) are disordered.

This sequence belongs to the DEAD box helicase family. DEAH subfamily. PRP16 sub-subfamily. As to quaternary structure, interacts with the Phytophthora PSR1 protein.

It localises to the nucleus. The catalysed reaction is ATP + H2O = ADP + phosphate + H(+). Involved in pre-mRNA splicing by mediating structural transitions of the spliceosome during the catalytic step. Facilitates expression of genes involved in auxin-mediated development including male-gametophyte transmission, apical-basal patterning of embryonic and gynoecium development, stamen development, phyllotactic flower positioning, and vascular development. Also involved in root-meristem maintenance and planar polarity of root-hair positioning. Acts as a component of RNA silencing that regulates distinct classes of endogenous small RNAs. Functions as a positive regulator of plant immunity. This Arabidopsis thaliana (Mouse-ear cress) protein is Pre-mRNA-splicing factor ATP-dependent RNA helicase DEAH7.